We begin with the raw amino-acid sequence, 810 residues long: MQRKELVLLFLLFLQPGHGIPLDDYVTTQGASLCSSTKKQLSVGSTEECAVKCEKETSFICRSFQYHSKEQQCVIMAENSKSTPVLRMRDVILFEKKMYLSECKVGNGKYYRGTVSKTKTGLTCQKWSAETPHKPRFSPDENPSEGLDQNYCRNPDNDPKGPWCYTMDPEVRYEYCEIIQCEDECMHCSGQNYVGKISRTMSGLECQPWDSQIPHPHGFIPSKFPSKNLKMNYCRNPDGEPRPWCFTMDRNKRWEYCDIPRCTTPPPPSGPTYQCLMGNGEHYQGNVAVTVSGLTCQRWGEQSPHRHDRTPENYPCKNLDENYCRNPDGEPAPWCFTTNSSVRWEFCKIPDCVSSASETEHSDAPVIVPPEQTPVVQECYQGNGQTYRGTSSTTITGKKCQPWTSMRPHRHSKTPENYPDADLTMNYCRNPDGDKGPWCYTTDPSVRWEFCNLKKCSGTEMSATNSSPVQVSSASESSEQDCIIDNGKGYRGTKATTGAGTPCQAWAAQEPHRHSIFTPETNPRADLQENYCRNPDGDANGPWCYTTNPRKLFDYCDIPHCVSPSSADCGKPKVEPKKCPGRVGGCVAHPHSWPWQVSLRRFGQHFCGGTLISPEWVVTAAHCLEKFSNPAIYKVVLGAHQETRLERDVQIKGVTKMFLEPYRADIALLKLSSPAIITDKDHPACLPNSNYMVADRSLCYITGWGETKGTYGAGLLKEAQLPVIENKVCNRQSFLNGRVRSTELCAGHLAGGVDSCQGDSGGPLVCFEKDRYILQGVTSWGLGCARLTRPGVYVRVSRYVSWLQDVMRNN.

Positions 1-19 (MQRKELVLLFLLFLQPGHG) are cleaved as a signal peptide. Residues 20-98 (IPLDDYVTTQ…RDVILFEKKM (79 aa)) form the PAN domain. Cystine bridges form between C49–C73, C53–C61, C103–C181, C124–C164, C152–C176, C185–C262, C188–C316, C206–C245, C234–C257, C275–C352, C296–C335, C324–C347, C379–C456, C400–C439, C428–C451, C482–C561, C503–C544, C532–C556, C569–C685, C579–C586, C607–C623, C699–C766, C729–C745, and C756–C784. 5 Kringle domains span residues 103-181 (CKVG…IIQC), 185-262 (CMHC…IPRC), 275-352 (CLMG…IPDC), 379-456 (CYQG…LKKC), and 482-561 (CIID…IPHC). N339 carries an N-linked (GlcNAc...) asparagine glycan. Positions 398-418 (KKCQPWTSMRPHRHSKTPENY) are disordered. The 227-residue stretch at 582-808 (RVGGCVAHPH…YVSWLQDVMR (227 aa)) folds into the Peptidase S1 domain. The residue at position 598 (S598) is a Phosphoserine. Active-site charge relay system residues include H622 and D665. Catalysis depends on S760, which acts as the Charge relay system.

Belongs to the peptidase S1 family. Plasminogen subfamily. In terms of assembly, interacts with CSPG4 and AMOT. Interacts (via the Kringle domains) with HRG; the interaction tethers PLG to the cell surface and enhances its activation. Interacts (via Kringle 4 domain) with ADA; the interaction stimulates PLG activation when in complex with DPP4. Angiostatin: Interacts with ATP5F1A; the interaction inhibits most of the angiogenic effects of angiostatin. In the presence of the inhibitor, the activation involves only cleavage after Arg-582, yielding two chains held together by two disulfide bonds. In the absence of the inhibitor, the activation involves additionally the removal of the activation peptide.

The protein localises to the secreted. It catalyses the reaction Preferential cleavage: Lys-|-Xaa &gt; Arg-|-Xaa, higher selectivity than trypsin. Converts fibrin into soluble products.. With respect to regulation, converted into plasmin by plasminogen activators, both plasminogen and its activator being bound to fibrin. Cannot be activated with streptokinase. Plasmin dissolves the fibrin of blood clots and acts as a proteolytic factor in a variety of other processes including embryonic development, tissue remodeling, tumor invasion, and inflammation. In ovulation, weakens the walls of the Graafian follicle. It activates the urokinase-type plasminogen activator, collagenases and several complement zymogens, such as C1, C4 and C5. Cleavage of fibronectin and laminin leads to cell detachment and apoptosis. Also cleaves fibrin, thrombospondin and von Willebrand factor. Its role in tissue remodeling and tumor invasion may be modulated by CSPG4. Binds to cells. The protein is Plasminogen (PLG) of Erinaceus europaeus (Western European hedgehog).